Reading from the N-terminus, the 569-residue chain is MVVIAALLGSLAVLAFLFYLWYLTIFIIVHKNQQYLEQTKALYNKLKLSNFNSVIVPFQLLRSEKKALEQPVKLLKSFQESFNSEINSALEQLLVFSEPKALYNCFWFNRNIKLLRKNLQGLHDKQQRYVKLTKNAIAYFDSSYDTLVFYRQAFCLLVSFINDFLVHKYDSLFYLNIINRISLLFKDVELHIKNKDVKQQNQALNKLHNNLAQTIITASRQYFFDVKVGYLNYHFQILSQKVTQLRSMKNKAINSQEVAKFQELITNIGATLAECSQALGNINLALCEQRINQAKEQIDVLSNAVSVKEKAISLVVSNVDSFLKSINHYQQQNALLQTLMKEIELMFQNNLDTVNIINQINEHSLLIAQKTQLLNQENALTEFIDYEKLFRLMSEAMKLLDGLKNLLNELFALSANKFDDYRFFVYTLDDFRFKFFQIENLIANEELIISEKTLKIISQAKHQFDDIFTQAKNDYEGAFSYLNEKVRFFQNQLTHVIVDVVGLMNLRSMCKHTFIFANKYRQESPQINESLETLTQFYQQQNYSETLSGLISLLGKIKSSAKQHHLDLN.

A helical membrane pass occupies residues 2 to 22 (VVIAALLGSLAVLAFLFYLWY).

Its subcellular location is the membrane. This is an uncharacterized protein from Mycoplasma pneumoniae (strain ATCC 29342 / M129 / Subtype 1) (Mycoplasmoides pneumoniae).